A 334-amino-acid chain; its full sequence is Retinol dehydrogenase 14 (334 aa).

51 to 57 contacts NADP(+); the sequence is GANSGLG. S190 contacts substrate. Y215 (proton acceptor) is an active-site residue.

It belongs to the short-chain dehydrogenases/reductases (SDR) family.

The enzyme catalyses all-trans-retinol + NADP(+) = all-trans-retinal + NADPH + H(+). It catalyses the reaction 11-cis-retinol + NADP(+) = 11-cis-retinal + NADPH + H(+). It carries out the reaction 9-cis-retinol + NADP(+) = 9-cis-retinal + NADPH + H(+). Its function is as follows. Retinol dehydrogenase with a clear preference for NADP. Displays high activity towards 9-cis, 11-cis and all-trans-retinol. Shows a very weak activity towards 13-cis-retinol. Has no activity towards steroids. The sequence is that of Retinol dehydrogenase 14 (Rdh14) from Mus musculus (Mouse).